The sequence spans 61 residues: MDIKGLLVILFFVLLITGEVENMKPKKHKYKYKNRKRFLENFEEPLQKRDMNEESYELFNQ.

An N-terminal signal peptide occupies residues 1-18 (MDIKGLLVILFFVLLITG).

Belongs to the non-disulfide-bridged peptide (NDBP) superfamily. Long chain multifunctional peptide (group 2) family. Expressed by the venom gland.

It is found in the secreted. In Lychas mucronatus (Chinese swimming scorpion), this protein is Venom protein 22.1.